The chain runs to 2017 residues: Rootletin (2017 aa).

Coiled-coil stretches lie at residues 70–262 (ATEM…KVTN) and 318–444 (ERDL…LETE). The span at 464–483 (SESGVQLSGSERTADASNGS) shows a compositional bias: polar residues. Positions 464-518 (SESGVQLSGSERTADASNGSLRGLSGQRTPSPPRRSSPGRGRSPRRGPSPACSDS) are disordered. Positions 499–513 (SSPGRGRSPRRGPSP) are enriched in low complexity. Coiled-coil stretches lie at residues 546–1058 (QDLL…LAES) and 1091–1438 (EMER…GLRS). Disordered stretches follow at residues 1184-1226 (LRES…RSAV) and 1443-1575 (GLGL…GRLS). 7 positions are modified to phosphoserine: S1460, S1470, S1476, S1483, S1486, S1490, and S1496. Residues 1505–1704 (EAVRGALREF…DSEVKAGTLQ (200 aa)) are a coiled coil. Over residues 1510–1529 (ALREFLQELRSAQRERDELR) the composition is skewed to basic and acidic residues. Phosphoserine is present on residues S1575 and S1660. Residues 1962 to 2017 (RSAQAQTERTLEARERAHRQRVRGLEEQVSTLKGQLQQELRRSSAPFSPPSGPPEK) form a disordered region. Polar residues predominate over residues 1989 to 1999 (QVSTLKGQLQQ). Positions 2008–2017 (FSPPSGPPEK) are enriched in pro residues.

The protein belongs to the rootletin family. In terms of assembly, homomer. Interacts with KLC3, NEK2 and the N-terminus of CEP250. Interacts with CEP44. Interacts with CCDC102B (via N-terminus). Phosphorylated by NEK2 which may regulate its association with centrosomes.

The protein localises to the cytoplasm. The protein resides in the cytoskeleton. It localises to the microtubule organizing center. It is found in the centrosome. Its subcellular location is the centriole. The protein localises to the cilium basal body. In terms of biological role, major structural component of the ciliary rootlet, a cytoskeletal-like structure in ciliated cells which originates from the basal body at the proximal end of a cilium and extends proximally toward the cell nucleus. Furthermore, is required for the correct positioning of the cilium basal body relative to the cell nucleus, to allow for ciliogenesis. Contributes to centrosome cohesion before mitosis. This Homo sapiens (Human) protein is Rootletin.